A 118-amino-acid chain; its full sequence is Putative membrane protein insertion efficiency factor (118 aa).

The segment at 76-118 (WDPVPQRRPRRRDAAAADAAMSAPHACKGSPHAVVGDTNDGST) is disordered. Positions 91–101 (AADAAMSAPHA) are enriched in low complexity.

Belongs to the UPF0161 family.

It localises to the cell membrane. Its function is as follows. Could be involved in insertion of integral membrane proteins into the membrane. The sequence is that of Putative membrane protein insertion efficiency factor from Nocardia farcinica (strain IFM 10152).